The sequence spans 562 residues: Arginine--tRNA ligase (562 aa).

The 'HIGH' region motif lies at 121–131 (PNIAKPISMGH).

Belongs to the class-I aminoacyl-tRNA synthetase family. As to quaternary structure, monomer.

It is found in the cytoplasm. The catalysed reaction is tRNA(Arg) + L-arginine + ATP = L-arginyl-tRNA(Arg) + AMP + diphosphate. The protein is Arginine--tRNA ligase of Lactiplantibacillus plantarum (strain ATCC BAA-793 / NCIMB 8826 / WCFS1) (Lactobacillus plantarum).